We begin with the raw amino-acid sequence, 323 residues long: DNA-directed RNA polymerase subunit alpha 1 (323 aa).

Residues 1–228 (MSNNNSKLEF…EQISVFVSLR (228 aa)) are alpha N-terminal domain (alpha-NTD). Positions 244–323 (IDPILLKPID…DNFRELVEGK (80 aa)) are alpha C-terminal domain (alpha-CTD).

The protein belongs to the RNA polymerase alpha chain family. Homodimer. The RNAP catalytic core consists of 2 alpha, 1 beta, 1 beta' and 1 omega subunit. When a sigma factor is associated with the core the holoenzyme is formed, which can initiate transcription.

It catalyses the reaction RNA(n) + a ribonucleoside 5'-triphosphate = RNA(n+1) + diphosphate. In terms of biological role, DNA-dependent RNA polymerase catalyzes the transcription of DNA into RNA using the four ribonucleoside triphosphates as substrates. In Francisella tularensis subsp. tularensis (strain FSC 198), this protein is DNA-directed RNA polymerase subunit alpha 1.